A 182-amino-acid chain; its full sequence is Nucleoside-triphosphatase THEP1 (182 aa).

ATP is bound by residues 10 to 17 and 102 to 109; these read GRPGIGKT and VVVIDEIG.

Belongs to the THEP1 NTPase family.

The enzyme catalyses a ribonucleoside 5'-triphosphate + H2O = a ribonucleoside 5'-diphosphate + phosphate + H(+). Functionally, has nucleotide phosphatase activity towards ATP, GTP, CTP, TTP and UTP. May hydrolyze nucleoside diphosphates with lower efficiency. This is Nucleoside-triphosphatase THEP1 from Thermofilum pendens (strain DSM 2475 / Hrk 5).